The sequence spans 128 residues: Head peptide (128 aa).

Residues 1–22 form the signal peptide; it reads MWKFASIVVLVVCLAWAVYCED. Pyrrolidone carboxylic acid is present on Q23. Residue P26 is modified to Hydroxyproline; partial. The segment at 27-128 is disordered; it reads SLKTRFGRSA…GRANKKRAAN (102 aa). F32 is modified (phenylalanine amide). The propeptide occupies 35 to 55; it reads SADEPESDNYVSNDIMEKRSA. Residue Q56 is modified to Pyrrolidone carboxylic acid. Residue P59 is modified to Hydroxyproline; partial. F65 is subject to Phenylalanine amide. Residues 66-78 are compositionally biased toward basic and acidic residues; that stretch reads GRSEGAEVMEKRS. Positions 68 to 79 are excised as a propeptide; that stretch reads SEGAEVMEKRSA. The residue at position 80 (Q80) is a Pyrrolidone carboxylic acid. Residue P83 is modified to Hydroxyproline; partial. The residue at position 89 (F89) is a Phenylalanine amide. The propeptide occupies 92–128; it reads SVANPESDGYMRKRSAESEPFVTRIRHGRANKKRAAN. Over residues 115 to 128 the composition is skewed to basic residues; it reads RIRHGRANKKRAAN.

This sequence belongs to the NPY family. Expressed in the brain, terminal ganglion, and midgut of adults: numerous neurosecretory cells and midgut endocrine cells. Expression is dynamic depending on reproductive cycle.

It is found in the secreted. Its function is as follows. Has a role in inhibiting host-seeking behavior during a reproductive cycle. The polypeptide is Head peptide (Aedes aegypti (Yellowfever mosquito)).